The following is a 301-amino-acid chain: 4-diphosphocytidyl-2-C-methyl-D-erythritol kinase (301 aa).

Lysine 10 is a catalytic residue. 96 to 106 (PMGGGVGGGSS) is a binding site for ATP. The active site involves aspartate 138.

The protein belongs to the GHMP kinase family. IspE subfamily.

It catalyses the reaction 4-CDP-2-C-methyl-D-erythritol + ATP = 4-CDP-2-C-methyl-D-erythritol 2-phosphate + ADP + H(+). Its pathway is isoprenoid biosynthesis; isopentenyl diphosphate biosynthesis via DXP pathway; isopentenyl diphosphate from 1-deoxy-D-xylulose 5-phosphate: step 3/6. Catalyzes the phosphorylation of the position 2 hydroxy group of 4-diphosphocytidyl-2C-methyl-D-erythritol. The polypeptide is 4-diphosphocytidyl-2-C-methyl-D-erythritol kinase (Alcanivorax borkumensis (strain ATCC 700651 / DSM 11573 / NCIMB 13689 / SK2)).